We begin with the raw amino-acid sequence, 369 residues long: Erythronate-4-phosphate dehydrogenase (369 aa).

The substrate site is built by Ser-45 and Thr-66. NAD(+) is bound at residue Asp-146. The active site involves Arg-209. Asp-233 is a binding site for NAD(+). Residue Glu-238 is part of the active site. His-255 functions as the Proton donor in the catalytic mechanism. An NAD(+)-binding site is contributed by Gly-258.

It belongs to the D-isomer specific 2-hydroxyacid dehydrogenase family. PdxB subfamily. As to quaternary structure, homodimer.

Its subcellular location is the cytoplasm. It catalyses the reaction 4-phospho-D-erythronate + NAD(+) = (R)-3-hydroxy-2-oxo-4-phosphooxybutanoate + NADH + H(+). It participates in cofactor biosynthesis; pyridoxine 5'-phosphate biosynthesis; pyridoxine 5'-phosphate from D-erythrose 4-phosphate: step 2/5. In terms of biological role, catalyzes the oxidation of erythronate-4-phosphate to 3-hydroxy-2-oxo-4-phosphonooxybutanoate. The polypeptide is Erythronate-4-phosphate dehydrogenase (Porphyromonas gingivalis (strain ATCC BAA-308 / W83)).